We begin with the raw amino-acid sequence, 271 residues long: MLVVAAMRVWNPEEGWANRVGRKREGKIVEILRRVTMTAHGLSHFPRQLLRMPRAALRKPNPALDLDSWLKTPEDLPATINSQTLFGNDQPLEIEVGSGKGLFIQTESDRRPEHNYFGIEIARKYAAHAAARLAKRERANAKMLAGDATPLFAVTDEGKRIEDGSLDGVHVYFPDPWWKKRHRKRRVLSHDNILNFSRCLRVGGRLHFWTDVLDYFELTVELIAEIAPELGVPLPETQRESTHDLDFHTHFERRSRKMGIPVYRVCYRKRS.

S-adenosyl-L-methionine is bound by residues Glu-95, Glu-120, Asp-147, and Asp-175. Residue Asp-175 is part of the active site. Residues Lys-179, Asp-211, and 249–252 (THFE) each bind substrate.

This sequence belongs to the class I-like SAM-binding methyltransferase superfamily. TrmB family.

It carries out the reaction guanosine(46) in tRNA + S-adenosyl-L-methionine = N(7)-methylguanosine(46) in tRNA + S-adenosyl-L-homocysteine. Its pathway is tRNA modification; N(7)-methylguanine-tRNA biosynthesis. Functionally, catalyzes the formation of N(7)-methylguanine at position 46 (m7G46) in tRNA. The protein is tRNA (guanine-N(7)-)-methyltransferase of Rhodopirellula baltica (strain DSM 10527 / NCIMB 13988 / SH1).